Here is a 133-residue protein sequence, read N- to C-terminus: Ribosome-binding factor A (133 aa).

Belongs to the RbfA family. Monomer. Binds 30S ribosomal subunits, but not 50S ribosomal subunits or 70S ribosomes.

The protein resides in the cytoplasm. One of several proteins that assist in the late maturation steps of the functional core of the 30S ribosomal subunit. Associates with free 30S ribosomal subunits (but not with 30S subunits that are part of 70S ribosomes or polysomes). Required for efficient processing of 16S rRNA. May interact with the 5'-terminal helix region of 16S rRNA. This Salmonella typhimurium (strain LT2 / SGSC1412 / ATCC 700720) protein is Ribosome-binding factor A.